A 626-amino-acid polypeptide reads, in one-letter code: Zinc finger protein 471 (626 aa).

One can recognise a KRAB domain in the interval 14–85 (VTFKDVAIDF…TSEMTRSPFS (72 aa)). 15 C2H2-type zinc fingers span residues 206-228 (FKCN…FRIH), 234-256 (YACE…HRTH), 262-284 (FECK…QRIH), 290-312 (YKCK…QRIH), 318-340 (YECK…QRCH), 346-369 (YECI…RSYH), 375-397 (FNCI…RRIH), 403-425 (YKCG…QRIH), 431-453 (YECD…QRVH), 459-481 (YECK…LRIH), 487-509 (YECK…QRIH), 515-537 (YECI…QKTH), 543-565 (YECN…QRIH), 571-593 (YKCT…QRLH), and 599-621 (YQCF…QRSH).

It belongs to the krueppel C2H2-type zinc-finger protein family.

It is found in the nucleus. May be involved in transcriptional regulation. The chain is Zinc finger protein 471 (ZNF471) from Homo sapiens (Human).